Reading from the N-terminus, the 294-residue chain is PAK4-inhibitor INKA2 (294 aa).

3 disordered regions span residues 50-143 (ISGG…STLM), 170-198 (PELEKGGEKGETGEAGEPKGGRGQPRELG), and 223-290 (LKEK…DINT). Residues 85–99 (SPSNQASLGSTSSGK) show a composition bias toward polar residues. Residues 134–177 (EPDDWTSTLMSRGRNRQPLVLGDNVFADLVGNWLDLPELEKGGE) form an inka box region. Residues 171-198 (ELEKGGEKGETGEAGEPKGGRGQPRELG) show a composition bias toward basic and acidic residues. Residues 241-253 (RSQKVKKRSHSKG) are compositionally biased toward basic residues.

This sequence belongs to the INKA family. As to quaternary structure, interacts with PAK4.

The protein resides in the nucleus. In terms of biological role, inhibitor of the serine/threonine-protein kinase PAK4. Acts by binding PAK4 in a substrate-like manner, inhibiting the protein kinase activity. The sequence is that of PAK4-inhibitor INKA2 from Bos taurus (Bovine).